The sequence spans 164 residues: 4-hydroxy-4-methyl-2-oxoglutarate aldolase (164 aa).

Residues 74–77 and Arg-96 each bind substrate; that span reads GGNL. Residue Asp-97 coordinates a divalent metal cation.

It belongs to the class II aldolase/RraA-like family. As to quaternary structure, homotrimer. It depends on Ni(2+) as a cofactor. Co(2+) serves as cofactor. The cofactor is Zn(2+).

It carries out the reaction 4-hydroxy-4-methyl-2-oxoglutarate = 2 pyruvate. The enzyme catalyses oxaloacetate + H(+) = pyruvate + CO2. Competitively inhibited by oxalate, a pyruvate enolate analog. Functionally, catalyzes the aldol cleavage of 4-hydroxy-4-methyl-2-oxoglutarate (HMG) into 2 molecules of pyruvate. Also contains a secondary oxaloacetate (OAA) decarboxylase activity due to the common pyruvate enolate transition state formed following C-C bond cleavage in the retro-aldol and decarboxylation reactions. The protein is 4-hydroxy-4-methyl-2-oxoglutarate aldolase of Thermus thermophilus (strain ATCC 27634 / DSM 579 / HB8).